A 245-amino-acid chain; its full sequence is tRNA (guanine-N(1)-)-methyltransferase (245 aa).

Residues Gly-114 and Ile-134–Leu-139 contribute to the S-adenosyl-L-methionine site.

This sequence belongs to the RNA methyltransferase TrmD family. As to quaternary structure, homodimer.

The protein resides in the cytoplasm. The enzyme catalyses guanosine(37) in tRNA + S-adenosyl-L-methionine = N(1)-methylguanosine(37) in tRNA + S-adenosyl-L-homocysteine + H(+). Specifically methylates guanosine-37 in various tRNAs. This chain is tRNA (guanine-N(1)-)-methyltransferase, found in Listeria monocytogenes serotype 4b (strain CLIP80459).